We begin with the raw amino-acid sequence, 788 residues long: Endonuclease MutS2 (788 aa).

Gly-334–Thr-341 contacts ATP. Residues Leu-713–Gln-788 enclose the Smr domain.

The protein belongs to the DNA mismatch repair MutS family. MutS2 subfamily. Homodimer. Binds to stalled ribosomes, contacting rRNA.

Functionally, endonuclease that is involved in the suppression of homologous recombination and thus may have a key role in the control of bacterial genetic diversity. In terms of biological role, acts as a ribosome collision sensor, splitting the ribosome into its 2 subunits. Detects stalled/collided 70S ribosomes which it binds and splits by an ATP-hydrolysis driven conformational change. Acts upstream of the ribosome quality control system (RQC), a ribosome-associated complex that mediates the extraction of incompletely synthesized nascent chains from stalled ribosomes and their subsequent degradation. Probably generates substrates for RQC. The chain is Endonuclease MutS2 from Enterococcus faecalis (strain ATCC 700802 / V583).